The chain runs to 634 residues: DNA-directed RNA polymerase subunit gamma (634 aa).

The Zn(2+) site is built by C74, C76, C89, and C92. The Mg(2+) site is built by D471, D473, and D475.

It belongs to the RNA polymerase beta' chain family. RpoC1 subfamily. In terms of assembly, in cyanobacteria the RNAP catalytic core is composed of 2 alpha, 1 beta, 1 beta', 1 gamma and 1 omega subunit. When a sigma factor is associated with the core the holoenzyme is formed, which can initiate transcription. It depends on Mg(2+) as a cofactor. Zn(2+) is required as a cofactor.

The enzyme catalyses RNA(n) + a ribonucleoside 5'-triphosphate = RNA(n+1) + diphosphate. Its function is as follows. DNA-dependent RNA polymerase catalyzes the transcription of DNA into RNA using the four ribonucleoside triphosphates as substrates. This Prochlorococcus marinus (strain MIT 9215) protein is DNA-directed RNA polymerase subunit gamma.